A 345-amino-acid chain; its full sequence is UDP-3-O-acylglucosamine N-acyltransferase (345 aa).

His237 acts as the Proton acceptor in catalysis.

The protein belongs to the transferase hexapeptide repeat family. LpxD subfamily. As to quaternary structure, homotrimer.

It carries out the reaction a UDP-3-O-[(3R)-3-hydroxyacyl]-alpha-D-glucosamine + a (3R)-hydroxyacyl-[ACP] = a UDP-2-N,3-O-bis[(3R)-3-hydroxyacyl]-alpha-D-glucosamine + holo-[ACP] + H(+). It participates in bacterial outer membrane biogenesis; LPS lipid A biosynthesis. Catalyzes the N-acylation of UDP-3-O-acylglucosamine using 3-hydroxyacyl-ACP as the acyl donor. Is involved in the biosynthesis of lipid A, a phosphorylated glycolipid that anchors the lipopolysaccharide to the outer membrane of the cell. The protein is UDP-3-O-acylglucosamine N-acyltransferase of Geobacter sp. (strain M21).